The following is a 523-amino-acid chain: DNA-(apurinic or apyrimidinic site) endonuclease 2 (523 aa).

Residue Glu42 participates in Mg(2+) binding. Tyr151 is an active-site residue. Positions 191, 193, and 294 each coordinate Mg(2+). The active-site Proton donor/acceptor is Asp191. The tract at residues 348–392 (MKKNKNNSPTQSENVSASASSGSSPTVSRANSVIDVDAYPPEKRR) is disordered. Over residues 353–362 (NNSPTQSENV) the composition is skewed to polar residues. Cys458, His461, Cys484, and Cys508 together coordinate Zn(2+). A GRF-type zinc finger spans residues 458 to 517 (CEGHKEPCKYLTVRKPGINYGRKFWICARPVGELIKNSNAVSEEDTQPFQCRFFIWDSDW).

Belongs to the DNA repair enzymes AP/ExoA family. The cofactor is Mg(2+). Mn(2+) is required as a cofactor.

The protein resides in the nucleus. The catalysed reaction is Exonucleolytic cleavage in the 3'- to 5'-direction to yield nucleoside 5'-phosphates.. Functionally, DNA repair enzyme that cleaves apurinic/apyrimidinic (AP) sites and removes 3'-blocking groups present at single strand breaks of damaged DNA. Provides the majority of the AP-endonuclease (APE) activity. Repairs phleomycin D1-induced DNA damage. Plays a role in oxidative damage repair. The protein is DNA-(apurinic or apyrimidinic site) endonuclease 2 (apn2) of Schizosaccharomyces pombe (strain 972 / ATCC 24843) (Fission yeast).